A 125-amino-acid polypeptide reads, in one-letter code: Small ribosomal subunit protein uS13 (125 aa).

The disordered stretch occupies residues 90–125; the sequence is QRHRKGLPVRGQRTKTNARTRKGPKRTVAGKKKATK.

Belongs to the universal ribosomal protein uS13 family. Part of the 30S ribosomal subunit. Forms a loose heterodimer with protein S19. Forms two bridges to the 50S subunit in the 70S ribosome.

Functionally, located at the top of the head of the 30S subunit, it contacts several helices of the 16S rRNA. In the 70S ribosome it contacts the 23S rRNA (bridge B1a) and protein L5 of the 50S subunit (bridge B1b), connecting the 2 subunits; these bridges are implicated in subunit movement. Contacts the tRNAs in the A and P-sites. The sequence is that of Small ribosomal subunit protein uS13 from Bifidobacterium adolescentis (strain ATCC 15703 / DSM 20083 / NCTC 11814 / E194a).